We begin with the raw amino-acid sequence, 634 residues long: 1-phosphatidylinositol 4,5-bisphosphate phosphodiesterase zeta-1 (634 aa).

Residues 35–70 (CNTIHVKYIFKDNDRLKQGRITIEEFRTIYRIITYR) form the EF-hand domain. Residues 155 to 299 (QDMTHPLTDY…LKFKILVRNK (145 aa)) form the PI-PLC X-box domain. Active-site residues include H170 and H215. A disordered region spans residues 312–345 (GSDMHGKVEEFEEEEEIEQEEDGSGAKEPEPVGD). The segment covering 321-334 (EFEEEEEIEQEEDG) has biased composition (acidic residues). Positions 376–492 (LSDLVIYTKV…GYVLKPRFLR (117 aa)) constitute a PI-PLC Y-box domain. The C2 domain maps to 492–615 (RDKKTKFNPH…RGYRRVPLFS (124 aa)).

As to quaternary structure, interacts (via its C2 domain) with PtdIns(3)P and, to a lesser extent, PtdIns(5)P in vitro. It depends on Ca(2+) as a cofactor.

It is found in the nucleus. Its subcellular location is the cytoplasm. The protein localises to the perinuclear region. The enzyme catalyses a 1,2-diacyl-sn-glycero-3-phospho-(1D-myo-inositol-4,5-bisphosphate) + H2O = 1D-myo-inositol 1,4,5-trisphosphate + a 1,2-diacyl-sn-glycerol + H(+). The production of the second messenger molecules diacylglycerol (DAG) and inositol 1,4,5-trisphosphate (IP3) is mediated by activated phosphatidylinositol-specific phospholipase C enzymes. In vitro, hydrolyzes PtdIns(4,5)P2 in a Ca(2+)-dependent manner. Triggers intracellular Ca(2+) oscillations in oocytes solely during M phase and is involved in inducing oocyte activation and initiating embryonic development up to the blastocyst stage. Is therefore a strong candidate for the egg-activating soluble sperm factor that is transferred from the sperm into the egg cytoplasm following gamete membrane fusion. May exert an inhibitory effect on phospholipase-C-coupled processes that depend on calcium ions and protein kinase C, including CFTR trafficking and function. The polypeptide is 1-phosphatidylinositol 4,5-bisphosphate phosphodiesterase zeta-1 (Bos taurus (Bovine)).